Reading from the N-terminus, the 208-residue chain is Protein-L-isoaspartate O-methyltransferase (208 aa).

Ser-59 is a catalytic residue.

This sequence belongs to the methyltransferase superfamily. L-isoaspartyl/D-aspartyl protein methyltransferase family.

Its subcellular location is the cytoplasm. The enzyme catalyses [protein]-L-isoaspartate + S-adenosyl-L-methionine = [protein]-L-isoaspartate alpha-methyl ester + S-adenosyl-L-homocysteine. Its function is as follows. Catalyzes the methyl esterification of L-isoaspartyl residues in peptides and proteins that result from spontaneous decomposition of normal L-aspartyl and L-asparaginyl residues. It plays a role in the repair and/or degradation of damaged proteins. The polypeptide is Protein-L-isoaspartate O-methyltransferase (Klebsiella pneumoniae (strain 342)).